Here is a 1779-residue protein sequence, read N- to C-terminus: 6-methylsalicylic acid synthase (1779 aa).

The span at 1-11 (MSASRSSTKFS) shows a compositional bias: polar residues. The segment at 1-40 (MSASRSSTKFSTPAEGSDNGKEFTTPATSTEGHEVPDRPG) is disordered. The span at 31–40 (EGHEVPDRPG) shows a compositional bias: basic and acidic residues. Residues 43–472 (LADVAIIGMA…GTVSHAVLEA (430 aa)) enclose the Ketosynthase family 3 (KS3) domain. Residues Cys215, His350, and His392 each act as for beta-ketoacyl synthase activity in the active site. The segment at 586–883 (WIFSGHGAQW…TPTMVRRQPA (298 aa)) is malonyl-CoA:ACP transacylase (MAT) domain. The active-site For acyl/malonyl transferase activity is Ser672. Residues 942–1218 (THDPAANNLL…SFAGLEGESF (277 aa)) are product template (PT) domain. The tract at residues 948–1064 (NNLLGKRIAL…AAVGAANVVP (117 aa)) is N-terminal hotdog fold. The 272-residue stretch at 948–1219 (NNLLGKRIAL…FAGLEGESFS (272 aa)) folds into the PKS/mFAS DH domain. His980 acts as the Proton acceptor; for dehydratase activity in catalysis. The interval 1079 to 1219 (PQKLADSFSI…FAGLEGESFS (141 aa)) is C-terminal hotdog fold. The active-site Proton donor; for dehydratase activity is the Asp1138. Residues 1703 to 1777 (QHLRDVINGC…HLVKHFTKEL (75 aa)) enclose the Carrier domain. Ser1737 is subject to O-(pantetheine 4'-phosphoryl)serine.

It carries out the reaction 3 malonyl-CoA + acetyl-CoA + NADPH + 3 H(+) = 6-methylsalicylate + 3 CO2 + NADP(+) + 4 CoA + H2O. The protein operates within secondary metabolite biosynthesis; terpenoid biosynthesis. Non-reducing polyketide synthase; part of the gene cluster that mediates the biosynthesis of yanuthone D, a fungal isoprenoid epoxycyclohexenone that acts as an antibiotic against fungi and bacteria. The first step of the pathway is the synthesis of 6-methylsalicylic acid (6-MSA) by the polyketide synthase yanA. 6-MSA is then converted to m-cresol by the decarboxylase yanB. The cytochrome P450 monooxygenase yanC then catalyzes the oxidation of m-cresol to toluquinol. Epoxidation of toluquinol is then performed by the short chain dehydrogenase yanD, with the help of yanE, and a further prenylation by yanG leads to 7-deacetoxyyanuthone A. The next step is the hydroxylation of C-22 of 7-deacetoxyyanuthone A by the cytochrome P450 monooxygenase yanH to yield 22-deacetylyanuthone A. O-Mevalon transferase yanI then attaches mevalon to the hydroxyl group of 22-deacetylyanuthone A to produce yanuthone E. Finally, the FAD-dependent monooxygenase yanF oxidizes the hydroxyl group at C15 of yanuthone E to form yanuthone D. Furthermore, several branching points in the pathway lead to the production of yanuthones F and G from 7-deacetoxyyanuthone A; yanuthones H and I from 22-deacetylyanuthone A; and yanuthone J from yanuthone E. The chain is 6-methylsalicylic acid synthase from Aspergillus niger (strain ATCC 1015 / CBS 113.46 / FGSC A1144 / LSHB Ac4 / NCTC 3858a / NRRL 328 / USDA 3528.7).